We begin with the raw amino-acid sequence, 245 residues long: Geranylgeranylglyceryl phosphate synthase (245 aa).

Mg(2+) contacts are provided by Asp20 and Ser50. Sn-glycerol 1-phosphate is bound by residues 169-175 (YLEAGSG), 202-203 (GG), and 224-225 (GT).

The protein belongs to the GGGP/HepGP synthase family. Group II subfamily. The cofactor is Mg(2+).

Its subcellular location is the cytoplasm. The catalysed reaction is sn-glycerol 1-phosphate + (2E,6E,10E)-geranylgeranyl diphosphate = sn-3-O-(geranylgeranyl)glycerol 1-phosphate + diphosphate. It participates in membrane lipid metabolism; glycerophospholipid metabolism. In terms of biological role, prenyltransferase that catalyzes the transfer of the geranylgeranyl moiety of geranylgeranyl diphosphate (GGPP) to the C3 hydroxyl of sn-glycerol-1-phosphate (G1P). This reaction is the first ether-bond-formation step in the biosynthesis of archaeal membrane lipids. This is Geranylgeranylglyceryl phosphate synthase from Ignicoccus hospitalis (strain KIN4/I / DSM 18386 / JCM 14125).